A 142-amino-acid polypeptide reads, in one-letter code: Hemoglobin subunit alpha (142 aa).

The Globin domain occupies 2 to 142 (VLSANDKSNV…VGNVLTSKYR (141 aa)). His59 is an O2 binding site. His88 contacts heme b.

This sequence belongs to the globin family. Heterotetramer of two alpha chains and two beta chains. Red blood cells.

In terms of biological role, involved in oxygen transport from the lung to the various peripheral tissues. This Aptenodytes forsteri (Emperor penguin) protein is Hemoglobin subunit alpha (HBA).